Here is a 729-residue protein sequence, read N- to C-terminus: MNPFQKNESKETLFSPVSTEEMLPRPPSPPKKSPPKIFGSSYPVSIAFIVVNEFCERFSYYGMKAVLTLYFLYFLHWNEDTSTSVYHAFSSLCYFTPILGAAIADSWLGKFKTIIYLSLVYVLGHVFKSLGAIPILGGKMLHTILSLVGLSLIALGTGGIKPCVAAFGGDQFEEEHAEARTRYFSVFYLAINAGSLISTFITPMLRGDVKCFGQDCYALAFGVPGLLMVLALVVFAMGSKMYRKPPPEGNIVAQVIKCIWFALCNRFRNRSGDLPKRQHWLDWAAEKYPKHLIADVKALTRVLFLYIPLPMFWALLDQQGSRWTLQANKMNGDLGFFVLQPDQMQVLNPFLVLIFIPLFDLVIYRLISKCRINFSSLRKMAVGMILACLAFAVAALVETKINGMIHPQPASQEIFLQVLNLADGDVKVTVLGSRNNSLLVESVSSFQNTTHYSKLHLEAKSQDLHFHLKYNSLSVHNDHSVEEKNCYQLLIHQDGESISSMLVKDTGIKPANGMAAIRFINTLHKDLNISLDTDAPLSVGKDYGVSAYRTVLRGKYPAVHCETEDKVFSLDLGQLDFGTTYLFVITNITSQGLQAWKAEDIPVNKLSIAWQLPQYVLVTAAEVMFSVTGLEFSYSQAPSSMKSVLQAAWLLTVAVGNIIVLVVAQFSGLAQWAEFVLFSCLLLVVCLIFSVMAYYYVPLKSEDTREATDKQIPAVQGNMINLETKNTRL.

Positions 1–35 are disordered; sequence MNPFQKNESKETLFSPVSTEEMLPRPPSPPKKSPP. Residues 1–57 lie on the Cytoplasmic side of the membrane; that stretch reads MNPFQKNESKETLFSPVSTEEMLPRPPSPPKKSPPKIFGSSYPVSIAFIVVNEFCER. Position 9 is a phosphoserine (S9). T12 carries the phosphothreonine modification. S28 is modified (phosphoserine). Residues 58–78 traverse the membrane as a helical segment; it reads FSYYGMKAVLTLYFLYFLHWN. The Extracellular segment spans residues 79–87; the sequence is EDTSTSVYH. A helical transmembrane segment spans residues 88-108; the sequence is AFSSLCYFTPILGAAIADSWL. The Cytoplasmic portion of the chain corresponds to 109–113; the sequence is GKFKT. The chain crosses the membrane as a helical span at residues 114–134; sequence IIYLSLVYVLGHVFKSLGAIP. At 135-139 the chain is on the extracellular side; that stretch reads ILGGK. A helical membrane pass occupies residues 140-160; the sequence is MLHTILSLVGLSLIALGTGGI. The Cytoplasmic segment spans residues 161–183; it reads KPCVAAFGGDQFEEEHAEARTRY. A helical membrane pass occupies residues 184–204; it reads FSVFYLAINAGSLISTFITPM. Topologically, residues 205-217 are extracellular; the sequence is LRGDVKCFGQDCY. The chain crosses the membrane as a helical span at residues 218–238; the sequence is ALAFGVPGLLMVLALVVFAMG. At 239 to 295 the chain is on the cytoplasmic side; the sequence is SKMYRKPPPEGNIVAQVIKCIWFALCNRFRNRSGDLPKRQHWLDWAAEKYPKHLIAD. Residues 296–316 form a helical membrane-spanning segment; the sequence is VKALTRVLFLYIPLPMFWALL. Residues 317–343 lie on the Extracellular side of the membrane; that stretch reads DQQGSRWTLQANKMNGDLGFFVLQPDQ. Residues 344-364 form a helical membrane-spanning segment; sequence MQVLNPFLVLIFIPLFDLVIY. Topologically, residues 365 to 380 are cytoplasmic; sequence RLISKCRINFSSLRKM. The helical transmembrane segment at 381–401 threads the bilayer; the sequence is AVGMILACLAFAVAALVETKI. The Extracellular segment spans residues 402–611; that stretch reads NGMIHPQPAS…PVNKLSIAWQ (210 aa). Residues 402 to 611 are extracellular domain (ECD); it reads NGMIHPQPAS…PVNKLSIAWQ (210 aa). N435, N448, N528, and N587 each carry an N-linked (GlcNAc...) asparagine glycan. A helical membrane pass occupies residues 612 to 632; that stretch reads LPQYVLVTAAEVMFSVTGLEF. At 633–643 the chain is on the cytoplasmic side; sequence SYSQAPSSMKS. Residues 644 to 664 traverse the membrane as a helical segment; sequence VLQAAWLLTVAVGNIIVLVVA. Residues 665-674 lie on the Extracellular side of the membrane; that stretch reads QFSGLAQWAE. Residues 675–695 traverse the membrane as a helical segment; sequence FVLFSCLLLVVCLIFSVMAYY. The Cytoplasmic segment spans residues 696-729; it reads YVPLKSEDTREATDKQIPAVQGNMINLETKNTRL.

It belongs to the major facilitator superfamily. Proton-dependent oligopeptide transporter (POT/PTR) (TC 2.A.17) family. Interacts (via extracellular domain region) with trypsin. Strongly expressed in kidney cortex and medulla. Also detected in brain, lung and spleen. Expressed in choroid plexus.

Its subcellular location is the apical cell membrane. The protein resides in the cytoplasmic vesicle. It is found in the phagosome membrane. It localises to the cell membrane. It catalyses the reaction a dipeptide(out) + 2 H(+)(out) = a dipeptide(in) + 2 H(+)(in). The enzyme catalyses glycyl-L-leucine(out) + 2 H(+)(out) = glycyl-L-leucine(in) + 2 H(+)(in). The catalysed reaction is glycyl-L-lysine(out) + 2 H(+)(out) = glycyl-L-lysine(in) + 2 H(+)(in). It carries out the reaction glycyl-L-glutamate(out) + 3 H(+)(out) = glycyl-L-glutamate(in) + 3 H(+)(in). It catalyses the reaction L-alanyl-L-alanine(out) + 2 H(+)(out) = L-alanyl-L-alanine(in) + 2 H(+)(in). The enzyme catalyses an L-amino acid tripeptide(out) + 2 H(+)(out) = an L-amino acid tripeptide(in) + 2 H(+)(in). The catalysed reaction is N-acetyl-D-muramoyl-L-alanyl-D-isoglutamine(out) + 3 H(+)(out) = N-acetyl-D-muramoyl-L-alanyl-D-isoglutamine(in) + 3 H(+)(in). It carries out the reaction carnosine(out) + 2 H(+)(out) = carnosine(in) + 2 H(+)(in). In terms of biological role, proton-coupled amino-acid transporter that transports oligopeptides of 2 to 4 amino acids with a preference for dipeptides. Transports neutral and anionic dipeptides with a proton to peptide stoichiometry of 2:1 or 3:1. In kidney, involved in the absorption of circulating di- and tripeptides from the glomerular filtrate. Can also transport beta-lactam antibiotics, such as the aminocephalosporin cefadroxil, and other antiviral and anticancer drugs. Transports the dipeptide-like aminopeptidase inhibitor bestatin. Also able to transport carnosine. Involved in innate immunity by promoting the detection of microbial pathogens by NOD-like receptors (NLRs). Mediates transport of bacterial peptidoglycans across the plasma membrane or, in macrophages, the phagosome membrane: catalyzes the transport of certain bacterial peptidoglycans, such as muramyl dipeptide (MDP), the NOD2 ligand. The sequence is that of Solute carrier family 15 member 2 from Rattus norvegicus (Rat).